The following is a 242-amino-acid chain: Protein HTATIP2 (242 aa).

Ala-2 is subject to N-acetylalanine. The required for interaction with elongation factor EEF1A1 stretch occupies residues 2 to 25 (AETEALSKLREDFRMQNKSVFILG). NADPH contacts are provided by Ser-27, Gly-28, Glu-29, Thr-30, Arg-52, Arg-53, Leu-92, Gly-93, Tyr-143, Lys-147, Leu-170, and Arg-178. Tyr-143 (proton acceptor) is an active-site residue. The active site involves Lys-147.

In terms of assembly, monomer. Forms homodimers during oxidative stress. Interacts (via N-terminus) with elongation factor EEF1A1 (via middle-region); the interaction is direct and competes with EEF1A1 binding to guanyl-nucleotide exchange factor EEF1B2, thereby inhibiting GDP for GTP exchange and reactivation of EEF1A1. Interacts with nuclear transport receptors XPO4, IPO5/RANBP5, IPO7, IPO9 and KPNB1 as well as GCN1L1/GCN1 and LRPPRC probably through their HEAT repeats. Binds NCOA5/CIA. As to quaternary structure, interacts (via N-terminus) with proteasome subunit PSMD4/s5a. (Microbial infection) Interacts with HIV-1 Tat (via activation domain). As to expression, high levels in liver, lung, skeletal muscle, pancreas and placenta. Moderate levels in heart and kidney. Low levels in brain. Not expressed or low levels in variant small cell lung carcinomas, 33% of hepatocellular carcinomas and neuroblastomas. Levels are reduced in the heart of patients with hypertrophic cardiomyopathy and failing hearts.

The protein localises to the cytoplasm. Represses translation by preventing reactivation of elongation factor eEF1A. May also inhibit nuclear import by competing with nuclear import substrates for binding to a subset of nuclear transport receptors. Has additionally been proposed to act as a redox sensor involved in cellular oxidative stress surveillance. This Homo sapiens (Human) protein is Protein HTATIP2.